The primary structure comprises 931 residues: Aconitate hydratase A (931 aa).

Positions Ser402 to Gly454 are disordered. Cys472, Cys538, and Cys541 together coordinate [4Fe-4S] cluster.

The protein belongs to the aconitase/IPM isomerase family. It depends on [4Fe-4S] cluster as a cofactor.

It carries out the reaction citrate = D-threo-isocitrate. The enzyme catalyses citrate = cis-aconitate + H2O. The catalysed reaction is cis-aconitate + H2O = D-threo-isocitrate. The protein operates within carbohydrate metabolism; tricarboxylic acid cycle; isocitrate from oxaloacetate: step 2/2. In terms of biological role, catalyzes the reversible isomerization of citrate to isocitrate via cis-aconitate in the tricarboxylic acid (TCA) cycle. Aconitase activity is important for the initiation of morphological and physiological differentiation of S.viridochromogenes. In addition, the apo form of AcnA (lacking the [4Fe-4S] cluster) functions as a RNA-binding regulatory protein, which binds to iron responsive elements (IREs) located on the untranslated region of certain mRNAs, including recA and ftsZ. Binding to IRE-like structures probably alters the target mRNA stability and regulates the protein amount. The apo form plays a regulatory role in oxidative stress response. This chain is Aconitate hydratase A, found in Streptomyces viridochromogenes (strain DSM 40736 / JCM 4977 / BCRC 1201 / Tue 494).